The chain runs to 109 residues: UPF0122 protein BH2485 (109 aa).

It belongs to the UPF0122 family.

Its function is as follows. Might take part in the signal recognition particle (SRP) pathway. This is inferred from the conservation of its genetic proximity to ftsY/ffh. May be a regulatory protein. This Halalkalibacterium halodurans (strain ATCC BAA-125 / DSM 18197 / FERM 7344 / JCM 9153 / C-125) (Bacillus halodurans) protein is UPF0122 protein BH2485.